Reading from the N-terminus, the 197-residue chain is HTH-type transcriptional regulator BetI (197 aa).

The HTH tetR-type domain maps to 8–68 (PIRRQQLIEA…ATMRYLMSVL (61 aa)). The H-T-H motif DNA-binding region spans 31–50 (SIALIARLAGVSNGIISHYF).

It participates in amine and polyamine biosynthesis; betaine biosynthesis via choline pathway [regulation]. Functionally, repressor involved in the biosynthesis of the osmoprotectant glycine betaine. It represses transcription of the choline transporter BetT and the genes of BetAB involved in the synthesis of glycine betaine. This is HTH-type transcriptional regulator BetI from Pseudomonas fluorescens (strain Pf0-1).